The primary structure comprises 350 residues: Succinylglutamate desuccinylase (350 aa).

Zn(2+)-binding residues include His-71, Glu-74, and His-169. Glu-233 is an active-site residue.

The protein belongs to the AspA/AstE family. Succinylglutamate desuccinylase subfamily. Requires Zn(2+) as cofactor.

The enzyme catalyses N-succinyl-L-glutamate + H2O = L-glutamate + succinate. It functions in the pathway amino-acid degradation; L-arginine degradation via AST pathway; L-glutamate and succinate from L-arginine: step 5/5. Its function is as follows. Transforms N(2)-succinylglutamate into succinate and glutamate. The sequence is that of Succinylglutamate desuccinylase from Pseudoalteromonas atlantica (strain T6c / ATCC BAA-1087).